Consider the following 142-residue polypeptide: Large ribosomal subunit protein uL13 (142 aa).

Belongs to the universal ribosomal protein uL13 family. Part of the 50S ribosomal subunit.

Functionally, this protein is one of the early assembly proteins of the 50S ribosomal subunit, although it is not seen to bind rRNA by itself. It is important during the early stages of 50S assembly. This Polynucleobacter asymbioticus (strain DSM 18221 / CIP 109841 / QLW-P1DMWA-1) (Polynucleobacter necessarius subsp. asymbioticus) protein is Large ribosomal subunit protein uL13.